The sequence spans 480 residues: tRNA-2-methylthio-N(6)-dimethylallyladenosine synthase (480 aa).

Residues 2 to 118 (NRVHIKTYGC…VPGYLDNLRA (117 aa)) enclose the MTTase N-terminal domain. [4Fe-4S] cluster contacts are provided by Cys11, Cys47, and Cys81. The segment at 145–169 (DHLLPQDSDSDSQPSTLNSQLRGAA) is disordered. Residues 149 to 159 (PQDSDSDSQPS) are compositionally biased toward low complexity. Residues 171–405 (PPPQITAFVS…LELLRQNSER (235 aa)) form the Radical SAM core domain. [4Fe-4S] cluster contacts are provided by Cys185, Cys189, and Cys192. The 63-residue stretch at 408-470 (ALLLDTVEEV…VSTLYGELML (63 aa)) folds into the TRAM domain.

This sequence belongs to the methylthiotransferase family. MiaB subfamily. As to quaternary structure, monomer. It depends on [4Fe-4S] cluster as a cofactor.

Its subcellular location is the cytoplasm. The catalysed reaction is N(6)-dimethylallyladenosine(37) in tRNA + (sulfur carrier)-SH + AH2 + 2 S-adenosyl-L-methionine = 2-methylsulfanyl-N(6)-dimethylallyladenosine(37) in tRNA + (sulfur carrier)-H + 5'-deoxyadenosine + L-methionine + A + S-adenosyl-L-homocysteine + 2 H(+). In terms of biological role, catalyzes the methylthiolation of N6-(dimethylallyl)adenosine (i(6)A), leading to the formation of 2-methylthio-N6-(dimethylallyl)adenosine (ms(2)i(6)A) at position 37 in tRNAs that read codons beginning with uridine. The chain is tRNA-2-methylthio-N(6)-dimethylallyladenosine synthase from Opitutus terrae (strain DSM 11246 / JCM 15787 / PB90-1).